The chain runs to 223 residues: Cytochrome c biogenesis ATP-binding export protein CcmA (223 aa).

The ABC transporter domain occupies 1–223 (MRSLACERDE…KSDMAVGNDY (223 aa)). ATP is bound at residue 31–38 (GSNGAGKT).

Belongs to the ABC transporter superfamily. CcmA exporter (TC 3.A.1.107) family. As to quaternary structure, the complex is composed of two ATP-binding proteins (CcmA) and two transmembrane proteins (CcmB).

It is found in the cell inner membrane. It catalyses the reaction heme b(in) + ATP + H2O = heme b(out) + ADP + phosphate + H(+). Part of the ABC transporter complex CcmAB involved in the biogenesis of c-type cytochromes; once thought to export heme, this seems not to be the case, but its exact role is uncertain. Responsible for energy coupling to the transport system. This chain is Cytochrome c biogenesis ATP-binding export protein CcmA, found in Saccharophagus degradans (strain 2-40 / ATCC 43961 / DSM 17024).